The sequence spans 105 residues: U-scoloptoxin(05)-Sa2a (105 aa).

An N-terminal signal peptide occupies residues 1-24 (MKEAVKMSCLCIFLFLFLFSLTDA). The segment at 79–105 (HVPESNQKDGKVSTHMSSCNTDGCNAN) is disordered. The segment covering 92 to 105 (THMSSCNTDGCNAN) has biased composition (polar residues).

Belongs to the scoloptoxin-05 family. Contains 4 disulfide bonds. In terms of tissue distribution, expressed by the venom gland.

It is found in the secreted. This is U-scoloptoxin(05)-Sa2a from Scolopendra alternans (Florida Keys giant centipede).